A 181-amino-acid polypeptide reads, in one-letter code: MTVLTIYREDLPEQPLTQATDGAAEIAALLAQQGLRFERWPAQVELADDATPEQILAAYATEVDRVKTEGGYITVDAVSLRPDHPDRAALRQKFLAEHIHSEDEVRFFVAGQGLFSLHLGDHVYALLCTQNDWISVPAGTRHWFDMGSQPYFTALRFFNNPEGWVAQFTGSDIASQFPLLP.

Residues H98, H100, E104, and H142 each coordinate Fe(2+). Ni(2+)-binding residues include H98, H100, E104, and H142.

Belongs to the acireductone dioxygenase (ARD) family. Monomer. Requires Fe(2+) as cofactor. It depends on Ni(2+) as a cofactor.

The catalysed reaction is 1,2-dihydroxy-5-(methylsulfanyl)pent-1-en-3-one + O2 = 3-(methylsulfanyl)propanoate + CO + formate + 2 H(+). The enzyme catalyses 1,2-dihydroxy-5-(methylsulfanyl)pent-1-en-3-one + O2 = 4-methylsulfanyl-2-oxobutanoate + formate + 2 H(+). The protein operates within amino-acid biosynthesis; L-methionine biosynthesis via salvage pathway; L-methionine from S-methyl-5-thio-alpha-D-ribose 1-phosphate: step 5/6. Catalyzes 2 different reactions between oxygen and the acireductone 1,2-dihydroxy-3-keto-5-methylthiopentene (DHK-MTPene) depending upon the metal bound in the active site. Fe-containing acireductone dioxygenase (Fe-ARD) produces formate and 2-keto-4-methylthiobutyrate (KMTB), the alpha-ketoacid precursor of methionine in the methionine recycle pathway. Ni-containing acireductone dioxygenase (Ni-ARD) produces methylthiopropionate, carbon monoxide and formate, and does not lie on the methionine recycle pathway. This is Acireductone dioxygenase from Synechococcus sp. (strain ATCC 27144 / PCC 6301 / SAUG 1402/1) (Anacystis nidulans).